The chain runs to 31 residues: Photosystem II reaction center protein M (31 aa).

Residues 5–25 (ILALMATALFIIIPTAFLIIL) traverse the membrane as a helical segment.

It belongs to the PsbM family. In terms of assembly, PSII is composed of 1 copy each of membrane proteins PsbA, PsbB, PsbC, PsbD, PsbE, PsbF, PsbH, PsbI, PsbJ, PsbK, PsbL, PsbM, PsbT, PsbX, PsbY, PsbZ, Psb30/Ycf12, at least 3 peripheral proteins of the oxygen-evolving complex and a large number of cofactors. It forms dimeric complexes.

It localises to the plastid. It is found in the chloroplast thylakoid membrane. Its function is as follows. One of the components of the core complex of photosystem II (PSII). PSII is a light-driven water:plastoquinone oxidoreductase that uses light energy to abstract electrons from H(2)O, generating O(2) and a proton gradient subsequently used for ATP formation. It consists of a core antenna complex that captures photons, and an electron transfer chain that converts photonic excitation into a charge separation. This subunit is found at the monomer-monomer interface. The polypeptide is Photosystem II reaction center protein M (Mesostigma viride (Green alga)).